Consider the following 76-residue polypeptide: Defensin-like protein 164 (76 aa).

An N-terminal signal peptide occupies residues 1 to 25 (MAKLLCSYLFICMFVLSGFLVFSSA). Disulfide bonds link C31–C76, C41–C61, C46–C70, and C50–C72.

This sequence belongs to the DEFL family.

The protein resides in the secreted. The protein is Defensin-like protein 164 (LCR38) of Arabidopsis thaliana (Mouse-ear cress).